Here is a 338-residue protein sequence, read N- to C-terminus: Glycerol-3-phosphate dehydrogenase [NAD(P)+] (338 aa).

Residues W11, R30, and K109 each contribute to the NADPH site. K109, G143, and S145 together coordinate sn-glycerol 3-phosphate. NADPH is bound at residue A147. Residues K198, D251, S261, R262, and N263 each contribute to the sn-glycerol 3-phosphate site. K198 functions as the Proton acceptor in the catalytic mechanism. R262 is a binding site for NADPH. Residues V286 and E288 each contribute to the NADPH site.

It belongs to the NAD-dependent glycerol-3-phosphate dehydrogenase family.

It localises to the cytoplasm. It carries out the reaction sn-glycerol 3-phosphate + NAD(+) = dihydroxyacetone phosphate + NADH + H(+). It catalyses the reaction sn-glycerol 3-phosphate + NADP(+) = dihydroxyacetone phosphate + NADPH + H(+). The protein operates within membrane lipid metabolism; glycerophospholipid metabolism. Catalyzes the reduction of the glycolytic intermediate dihydroxyacetone phosphate (DHAP) to sn-glycerol 3-phosphate (G3P), the key precursor for phospholipid synthesis. The chain is Glycerol-3-phosphate dehydrogenase [NAD(P)+] from Cupriavidus taiwanensis (strain DSM 17343 / BCRC 17206 / CCUG 44338 / CIP 107171 / LMG 19424 / R1) (Ralstonia taiwanensis (strain LMG 19424)).